Consider the following 241-residue polypeptide: Uracil-DNA glycosylase (241 aa).

Asp-71 (proton acceptor) is an active-site residue.

This sequence belongs to the uracil-DNA glycosylase (UDG) superfamily. UNG family.

The protein resides in the cytoplasm. The catalysed reaction is Hydrolyzes single-stranded DNA or mismatched double-stranded DNA and polynucleotides, releasing free uracil.. Its function is as follows. Excises uracil residues from the DNA which can arise as a result of misincorporation of dUMP residues by DNA polymerase or due to deamination of cytosine. This is Uracil-DNA glycosylase from Xanthomonas euvesicatoria pv. vesicatoria (strain 85-10) (Xanthomonas campestris pv. vesicatoria).